The chain runs to 345 residues: Phosphoribosylformylglycinamidine cyclo-ligase (345 aa).

Belongs to the AIR synthase family.

It is found in the cytoplasm. It catalyses the reaction 2-formamido-N(1)-(5-O-phospho-beta-D-ribosyl)acetamidine + ATP = 5-amino-1-(5-phospho-beta-D-ribosyl)imidazole + ADP + phosphate + H(+). It functions in the pathway purine metabolism; IMP biosynthesis via de novo pathway; 5-amino-1-(5-phospho-D-ribosyl)imidazole from N(2)-formyl-N(1)-(5-phospho-D-ribosyl)glycinamide: step 2/2. In Enterobacter sp. (strain 638), this protein is Phosphoribosylformylglycinamidine cyclo-ligase.